Reading from the N-terminus, the 314-residue chain is Aspartate carbamoyltransferase catalytic subunit (314 aa).

Carbamoyl phosphate is bound by residues arginine 55 and threonine 56. Lysine 83 serves as a coordination point for L-aspartate. Residues arginine 105, histidine 139, and glutamine 142 each coordinate carbamoyl phosphate. Positions 172 and 226 each coordinate L-aspartate. Carbamoyl phosphate contacts are provided by glycine 267 and proline 268.

This sequence belongs to the aspartate/ornithine carbamoyltransferase superfamily. ATCase family. As to quaternary structure, heterododecamer (2C3:3R2) of six catalytic PyrB chains organized as two trimers (C3), and six regulatory PyrI chains organized as three dimers (R2).

The catalysed reaction is carbamoyl phosphate + L-aspartate = N-carbamoyl-L-aspartate + phosphate + H(+). The protein operates within pyrimidine metabolism; UMP biosynthesis via de novo pathway; (S)-dihydroorotate from bicarbonate: step 2/3. In terms of biological role, catalyzes the condensation of carbamoyl phosphate and aspartate to form carbamoyl aspartate and inorganic phosphate, the committed step in the de novo pyrimidine nucleotide biosynthesis pathway. The chain is Aspartate carbamoyltransferase catalytic subunit from Rhodococcus erythropolis (strain PR4 / NBRC 100887).